The primary structure comprises 107 residues: Immunoglobulin kappa constant (107 aa).

One can recognise an Ig-like domain in the interval Pro-6 to Asn-103. A disulfide bridge links Cys-27 with Cys-87.

The protein is Immunoglobulin kappa constant of Mus musculus (Mouse).